Here is a 232-residue protein sequence, read N- to C-terminus: Ubiquinone biosynthesis O-methyltransferase (232 aa).

Residues R36, G55, D76, and M120 each coordinate S-adenosyl-L-methionine.

It belongs to the methyltransferase superfamily. UbiG/COQ3 family.

It carries out the reaction a 3-demethylubiquinol + S-adenosyl-L-methionine = a ubiquinol + S-adenosyl-L-homocysteine + H(+). The enzyme catalyses a 3-(all-trans-polyprenyl)benzene-1,2-diol + S-adenosyl-L-methionine = a 2-methoxy-6-(all-trans-polyprenyl)phenol + S-adenosyl-L-homocysteine + H(+). It participates in cofactor biosynthesis; ubiquinone biosynthesis. O-methyltransferase that catalyzes the 2 O-methylation steps in the ubiquinone biosynthetic pathway. The protein is Ubiquinone biosynthesis O-methyltransferase of Burkholderia vietnamiensis (strain G4 / LMG 22486) (Burkholderia cepacia (strain R1808)).